The sequence spans 222 residues: Deoxyribose-phosphate aldolase (222 aa).

D91 functions as the Proton donor/acceptor in the catalytic mechanism. K153 functions as the Schiff-base intermediate with acetaldehyde in the catalytic mechanism. The Proton donor/acceptor role is filled by K182.

This sequence belongs to the DeoC/FbaB aldolase family. DeoC type 1 subfamily.

The protein localises to the cytoplasm. It carries out the reaction 2-deoxy-D-ribose 5-phosphate = D-glyceraldehyde 3-phosphate + acetaldehyde. It participates in carbohydrate degradation; 2-deoxy-D-ribose 1-phosphate degradation; D-glyceraldehyde 3-phosphate and acetaldehyde from 2-deoxy-alpha-D-ribose 1-phosphate: step 2/2. Functionally, catalyzes a reversible aldol reaction between acetaldehyde and D-glyceraldehyde 3-phosphate to generate 2-deoxy-D-ribose 5-phosphate. This Mycoplasma capricolum subsp. capricolum (strain California kid / ATCC 27343 / NCTC 10154) protein is Deoxyribose-phosphate aldolase.